We begin with the raw amino-acid sequence, 146 residues long: Linear conopeptide (146 aa).

The first 19 residues, 1–19 (MLRLIIAAAVLVSACLAYP), serve as a signal peptide directing secretion. Positions 20-34 (QRREGAPADAANLQS) are excised as a propeptide. M40 is modified (methionine sulfoxide; partial; in Cn2). Propeptides lie at residues 58-80 (FLPFNPNLQMGYKRDFDENLEKR) and 104-146 (FLHN…DKEQ). A disordered region spans residues 107 to 146 (NEKGDKHPFANVDSADTDLGQFEPSAENKNGEFRFFDKEQ). Residues 135–146 (KNGEFRFFDKEQ) are compositionally biased toward basic and acidic residues.

As to expression, expressed by the venom duct.

The protein resides in the secreted. The sequence is that of Linear conopeptide from Conus consors (Singed cone).